A 134-amino-acid chain; its full sequence is Large ribosomal subunit protein eL32 (134 aa).

This sequence belongs to the eukaryotic ribosomal protein eL32 family.

This chain is Large ribosomal subunit protein eL32 (RpL32), found in Apis mellifera (Honeybee).